We begin with the raw amino-acid sequence, 385 residues long: ATP synthase subunit a-1 (385 aa).

Residues 1–133 (MRRIFLFDEN…ALNIVGQAAA (133 aa)) constitute a propeptide that is removed on maturation. The next 7 helical transmembrane spans lie at 154–174 (FSFTNSSLFMLLTLSFFLLLI), 220–240 (FFPCILVTFLFLLFCNLQGMI), 249–269 (HFLITLALSFSIFIGITIVGF), 276–296 (FFSFLLPAGVPLPLAPFLVLL), 316–336 (MMAGHSLVKILSGFAWTMLCM), 339–359 (IFYFIGALGPLFIVLALTGLE), and 362–382 (VAILQAYVFTILICIYLNDAI).

It belongs to the ATPase A chain family. As to quaternary structure, F-type ATPases have 2 components, CF(1) - the catalytic core - and CF(0) - the membrane proton channel. CF(1) has five subunits: alpha(3), beta(3), gamma(1), delta(1), epsilon(1). CF(0) has three main subunits: a, b and c.

The protein localises to the mitochondrion inner membrane. Mitochondrial membrane ATP synthase (F(1)F(0) ATP synthase or Complex V) produces ATP from ADP in the presence of a proton gradient across the membrane which is generated by electron transport complexes of the respiratory chain. F-type ATPases consist of two structural domains, F(1) - containing the extramembraneous catalytic core and F(0) - containing the membrane proton channel, linked together by a central stalk and a peripheral stalk. During catalysis, ATP synthesis in the catalytic domain of F(1) is coupled via a rotary mechanism of the central stalk subunits to proton translocation. Key component of the proton channel; it may play a direct role in the translocation of protons across the membrane. In Arabidopsis thaliana (Mouse-ear cress), this protein is ATP synthase subunit a-1 (ATP6-1).